Reading from the N-terminus, the 260-residue chain is Protein PET122, mitochondrial (260 aa).

A mitochondrion-targeting transit peptide spans 1–8; the sequence is MLSITRRL.

The protein localises to the mitochondrion inner membrane. Its function is as follows. Required for expression of the mitochondrial gene for cytochrome c oxidase subunit 3 (COX3). PET122 seems to work by directly interacting with the small ribosomal subunit to promote translation initiation on the COX3 mRNA. The polypeptide is Protein PET122, mitochondrial (PET122) (Saccharomyces bayanus (Yeast)).